A 298-amino-acid polypeptide reads, in one-letter code: Myoblast determination protein 1 homolog (298 aa).

Basic and acidic residues predominate over residues 53–73 (PEEHPHTRAPPREPTEEEHVR). Residues 53–77 (PEEHPHTRAPPREPTEEEHVRAPSG) are disordered. Residues 100 to 151 (DRRKAATMRERRRLSKVNEAFETLKRCTSTNPNQRLPKVEILRNAIRYIESL) form the bHLH domain. Disordered stretches follow at residues 170–220 (SGES…GKSS) and 242–298 (CPIL…YQVL). 2 stretches are compositionally biased toward polar residues: residues 173-183 (SDASSPRSNCS) and 257-284 (CSPQEGGNLSDSGAQIPSPTNCTPLPQE).

As to quaternary structure, efficient DNA binding requires dimerization with another bHLH protein. Seems to form active heterodimers with ITF-2.

The protein resides in the nucleus. Functionally, acts as a transcriptional activator that promotes transcription of muscle-specific target genes and plays a role in muscle differentiation. Induces fibroblasts to differentiate into myoblasts. Interacts with and is inhibited by the twist protein. This interaction probably involves the basic domains of both proteins. In Gallus gallus (Chicken), this protein is Myoblast determination protein 1 homolog (MYOD1).